The chain runs to 208 residues: MKQVFISQHPLVHHKLTLLRRATTEPKKFRELVSELSQFLLYEATLDLPLQERAIDTPLAPYHGHQIAERIGLVPILRAGLGMVDPILDLIPTAHVWHLGLYRDHATLQPVTYYNKLPPEVDVDLCLVLDPMLATGGSAVAAVSILKEWGASRIKFLGLIAAPEGVRALHEAHPNVPIHLAALDDHLNDRGYIVPGLGDAGDRLFGTG.

5-phospho-alpha-D-ribose 1-diphosphate is bound by residues arginine 78, arginine 103, and 130–138; that span reads DPMLATGGS. Uracil is bound by residues isoleucine 193 and 198-200; that span reads GDA. Aspartate 199 serves as a coordination point for 5-phospho-alpha-D-ribose 1-diphosphate.

The protein belongs to the UPRTase family. Requires Mg(2+) as cofactor.

The catalysed reaction is UMP + diphosphate = 5-phospho-alpha-D-ribose 1-diphosphate + uracil. It functions in the pathway pyrimidine metabolism; UMP biosynthesis via salvage pathway; UMP from uracil: step 1/1. Its activity is regulated as follows. Allosterically activated by GTP. Catalyzes the conversion of uracil and 5-phospho-alpha-D-ribose 1-diphosphate (PRPP) to UMP and diphosphate. This Roseiflexus castenholzii (strain DSM 13941 / HLO8) protein is Uracil phosphoribosyltransferase.